Consider the following 280-residue polypeptide: Pantothenate synthetase (280 aa).

30 to 37 (MGALHEGH) contributes to the ATP binding site. The Proton donor role is filled by histidine 37. A (R)-pantoate-binding site is contributed by glutamine 61. Residue glutamine 61 coordinates beta-alanine. 147–150 (GQKD) serves as a coordination point for ATP. A (R)-pantoate-binding site is contributed by glutamine 153. ATP contacts are provided by residues valine 176 and 184-187 (MSSR).

It belongs to the pantothenate synthetase family. In terms of assembly, homodimer.

The protein localises to the cytoplasm. It carries out the reaction (R)-pantoate + beta-alanine + ATP = (R)-pantothenate + AMP + diphosphate + H(+). It functions in the pathway cofactor biosynthesis; (R)-pantothenate biosynthesis; (R)-pantothenate from (R)-pantoate and beta-alanine: step 1/1. Functionally, catalyzes the condensation of pantoate with beta-alanine in an ATP-dependent reaction via a pantoyl-adenylate intermediate. This is Pantothenate synthetase from Thermodesulfovibrio yellowstonii (strain ATCC 51303 / DSM 11347 / YP87).